The chain runs to 492 residues: N-succinylglutamate 5-semialdehyde dehydrogenase (492 aa).

G220–G225 is a binding site for NAD(+). Active-site residues include E243 and C277.

Belongs to the aldehyde dehydrogenase family. AstD subfamily.

It catalyses the reaction N-succinyl-L-glutamate 5-semialdehyde + NAD(+) + H2O = N-succinyl-L-glutamate + NADH + 2 H(+). Its pathway is amino-acid degradation; L-arginine degradation via AST pathway; L-glutamate and succinate from L-arginine: step 4/5. Catalyzes the NAD-dependent reduction of succinylglutamate semialdehyde into succinylglutamate. The sequence is that of N-succinylglutamate 5-semialdehyde dehydrogenase from Escherichia coli (strain 55989 / EAEC).